The primary structure comprises 355 residues: Guanine nucleotide-binding protein subunit alpha-14 (355 aa).

In terms of domain architecture, G-alpha spans 34-355; it reads RELKLLLLGT…QLNLREFNLV (322 aa). The segment at 37–50 is G1 motif; it reads KLLLLGTGESGKST. GTP-binding positions include 42–49, 176–182, 201–205, 270–273, and alanine 327; these read GTGESGKS, LRVRVPT, DVGGQ, and NKKD. A Mg(2+)-binding site is contributed by serine 49. The interval 174-182 is G2 motif; that stretch reads DVLRVRVPT. Arginine 179 carries the post-translational modification ADP-ribosylarginine; by cholera toxin. Threonine 182 is a Mg(2+) binding site. The tract at residues 197 to 206 is G3 motif; sequence FRMVDVGGQR. The tract at residues 266–273 is G4 motif; sequence ILFLNKKD. The segment at 325 to 330 is G5 motif; that stretch reads TCATDT.

The protein belongs to the G-alpha family. G(q) subfamily. In terms of assembly, g proteins are composed of 3 units; alpha, beta and gamma. The alpha chain contains the guanine nucleotide binding site.

Functionally, guanine nucleotide-binding proteins (G proteins) are involved as modulators or transducers in various transmembrane signaling systems. This chain is Guanine nucleotide-binding protein subunit alpha-14 (GNA14), found in Homo sapiens (Human).